The chain runs to 502 residues: ATP synthase subunit alpha (502 aa).

Residue glycine 169–threonine 176 coordinates ATP.

It belongs to the ATPase alpha/beta chains family. As to quaternary structure, F-type ATPases have 2 components, CF(1) - the catalytic core - and CF(0) - the membrane proton channel. CF(1) has five subunits: alpha(3), beta(3), gamma(1), delta(1), epsilon(1). CF(0) has three main subunits: a(1), b(2) and c(9-12). The alpha and beta chains form an alternating ring which encloses part of the gamma chain. CF(1) is attached to CF(0) by a central stalk formed by the gamma and epsilon chains, while a peripheral stalk is formed by the delta and b chains.

Its subcellular location is the cell inner membrane. The enzyme catalyses ATP + H2O + 4 H(+)(in) = ADP + phosphate + 5 H(+)(out). In terms of biological role, produces ATP from ADP in the presence of a proton gradient across the membrane. The alpha chain is a regulatory subunit. This chain is ATP synthase subunit alpha, found in Kosmotoga olearia (strain ATCC BAA-1733 / DSM 21960 / TBF 19.5.1).